A 334-amino-acid polypeptide reads, in one-letter code: Protein-methionine-sulfoxide reductase catalytic subunit MsrP (334 aa).

Residues 1 to 44 (MKKNQFLKESDVTAESVFFMKRRQVLKALGISAAAFSLPHAAHA) constitute a signal peptide (tat-type signal). Mo-molybdopterin-binding positions include Asn88, 91 to 92 (YE), Cys146, Thr181, Asn233, Arg238, and 249 to 251 (GIK).

The protein belongs to the MsrP family. In terms of assembly, heterodimer of a catalytic subunit (MsrP) and a heme-binding subunit (MsrQ). It depends on Mo-molybdopterin as a cofactor. Post-translationally, predicted to be exported by the Tat system. The position of the signal peptide cleavage has not been experimentally proven.

It is found in the periplasm. The catalysed reaction is L-methionyl-[protein] + a quinone + H2O = L-methionyl-(S)-S-oxide-[protein] + a quinol. The enzyme catalyses L-methionyl-[protein] + a quinone + H2O = L-methionyl-(R)-S-oxide-[protein] + a quinol. In terms of biological role, part of the MsrPQ system that repairs oxidized periplasmic proteins containing methionine sulfoxide residues (Met-O), using respiratory chain electrons. Thus protects these proteins from oxidative-stress damage caused by reactive species of oxygen and chlorine generated by the host defense mechanisms. MsrPQ is essential for the maintenance of envelope integrity under bleach stress, rescuing a wide series of structurally unrelated periplasmic proteins from methionine oxidation, including the primary periplasmic chaperone SurA and the lipoprotein Pal. The catalytic subunit MsrP is non-stereospecific, being able to reduce both (R-) and (S-) diastereoisomers of methionine sulfoxide. This chain is Protein-methionine-sulfoxide reductase catalytic subunit MsrP, found in Escherichia coli O7:K1 (strain IAI39 / ExPEC).